The following is a 641-amino-acid chain: Epithelial sodium channel subunit beta (641 aa).

Residues 1 to 50 (MHVKKYLLKCLHRLQKGPGYTYKELLVWYCDNTNTHGPKRIIREGPKKKA) are Cytoplasmic-facing. Residues 51-71 (MWFLITLLFASLVCWQWGVFI) form a helical membrane-spanning segment. Residues 72 to 533 (KTYLSWEVSV…GGQFGFWMGG (462 aa)) lie on the Extracellular side of the membrane. 9 disulfides stabilise this stretch: cysteine 98-cysteine 273, cysteine 185-cysteine 190, cysteine 197-cysteine 204, cysteine 250-cysteine 257, cysteine 362-cysteine 449, cysteine 387-cysteine 445, cysteine 391-cysteine 441, cysteine 400-cysteine 427, and cysteine 402-cysteine 416. N-linked (GlcNAc...) asparagine glycosylation is present at asparagine 141. Asparagine 261 and asparagine 379 each carry an N-linked (GlcNAc...) asparagine glycan. A helical membrane pass occupies residues 534–554 (SVLCLIEFAEIIIDFVWITII). The Cytoplasmic segment spans residues 555 to 641 (KLVALAKGLR…VESDSEGDAV (87 aa)). The interval 596–641 (GHRSPDAEAYPDEQALPIPGTPPPNYDSLRLQPLDVVESDSEGDAV) is disordered. Residues 617 to 621 (PPPNY) carry the PY motif; recruits WW domain-containing proteins and is thereby required for ubiquitination and inhibition of the channel by NEDD4 and NEDD4L motif. The span at 632 to 641 (VESDSEGDAV) shows a compositional bias: acidic residues. A phosphoserine mark is found at serine 634 and serine 636.

This sequence belongs to the amiloride-sensitive sodium channel (TC 1.A.6) family. SCNN1B subfamily. In terms of assembly, component of the heterotrimeric epithelial sodium channel (ENaC) composed of an alpha/SCNN1A, a beta/SCNN1B and a gamma/SCNN1G subunit. Interacts with WWP1 (via WW domains). Interacts with WWP2 (via WW domains); inhibits the channel. Interacts with the full-length immature form of PCSK9 (pro-PCSK9). Interacts (N-glycosylated) with BPIFA1; the interaction is direct and inhibits the proteolytic processing of SCNN1A and SCNN1G and the activation of ENaC. Ubiquitinated. Can be ubiquitinated at multiple sites and undergo monoubiquitination and polyubiquitination. Ubiquitination by NEDD4 or NEDD4L inhibits the ENaC channel through endocytosis, intracellular retention and degradation of its individual subunits. However, some studies could not confirm the ubiquitination of this subunit of the ENaC. Post-translationally, phosphorylated on serine and threonine residues. Aldosterone and insulin increase the basal level of phosphorylation. In terms of processing, N-glycosylated. N-glycosylation is required for interaction with BPIFA1.

Its subcellular location is the apical cell membrane. The protein localises to the cytoplasmic vesicle membrane. It carries out the reaction Na(+)(in) = Na(+)(out). Originally identified and characterized by its inhibition by the diuretic drug amiloride. Its function is as follows. This is one of the three pore-forming subunits of the heterotrimeric epithelial sodium channel (ENaC), a critical regulator of sodium balance and fluid homeostasis. ENaC operates in epithelial tissues, where it mediates the electrodiffusion of sodium ions from extracellular fluid through the apical membrane of cells, with water following osmotically. It plays a key role in maintaining sodium homeostasis through electrogenic sodium reabsorption in the kidneys. Additionally, ENaC is essential for airway surface liquid homeostasis, which is crucial for proper mucus clearance. This Oryctolagus cuniculus (Rabbit) protein is Epithelial sodium channel subunit beta.